A 368-amino-acid chain; its full sequence is F-box only protein 28 (368 aa).

Over residues 1-11 (MAAASEERMAE) the composition is skewed to basic and acidic residues. Positions 1 to 56 (MAAASEERMAEEGGGGHGDGGSCSAAGSAQRQPPAPPSQAPPPGSQAPAAPALAPD) are disordered. Over residues 12–21 (EGGGGHGDGG) the composition is skewed to gly residues. The segment covering 22–32 (SCSAAGSAQRQ) has biased composition (low complexity). Positions 33–45 (PPAPPSQAPPPGS) are enriched in pro residues. The segment covering 46–55 (QAPAAPALAP) has biased composition (low complexity). The F-box domain maps to 61 to 109 (NNTLVALPIVAIENILSFMSYDEISQLRLVCKRMDLVCQRMLNQGFLKV). Residues serine 235 and serine 242 each carry the phosphoserine modification. Residue threonine 270 is modified to Phosphothreonine. The disordered stretch occupies residues 328–368 (MESAVGTSSGSGQSEESPRKRRKATEAIDSLRKSKRLRNRK). Serine 344 is modified (phosphoserine).

In terms of assembly, part of a SCF (SKP1-cullin-F-box) protein ligase complex.

The protein localises to the chromosome. Its subcellular location is the centromere. The protein resides in the kinetochore. Probably recognizes and binds to some phosphorylated proteins and promotes their ubiquitination and degradation. This Mus musculus (Mouse) protein is F-box only protein 28 (Fbxo28).